Consider the following 225-residue polypeptide: Endonuclease V (225 aa).

Residues Asp-43 and Asp-110 each contribute to the Mg(2+) site.

This sequence belongs to the endonuclease V family. Mg(2+) serves as cofactor.

Its subcellular location is the cytoplasm. The enzyme catalyses Endonucleolytic cleavage at apurinic or apyrimidinic sites to products with a 5'-phosphate.. In terms of biological role, DNA repair enzyme involved in the repair of deaminated bases. Selectively cleaves double-stranded DNA at the second phosphodiester bond 3' to a deoxyinosine leaving behind the intact lesion on the nicked DNA. In Thermotoga sp. (strain RQ2), this protein is Endonuclease V.